Reading from the N-terminus, the 192-residue chain is Genome polyprotein (192 aa).

The Cytoplasmic portion of the chain corresponds to 1–52; it reads RNLGKVIDTLTCGFADLMGYIPLVGAPLGGAARALAHGVRVLEDGVNYATGN. The interaction with APOA2 stretch occupies residues 6-57; that stretch reads VIDTLTCGFADLMGYIPLVGAPLGGAARALAHGVRVLEDGVNYATGNLPGCS. The tract at residues 48–51 is important for lipid droplets localization; the sequence is YATG. A helical membrane pass occupies residues 53 to 73; that stretch reads LPGCSFSIFLLALLSCLTVPA. The propeptide at 62–75 is ER anchor for the core protein, removed in mature form by host signal peptidase; the sequence is LLALLSCLTVPASA. Residues 74–192 are Lumenal-facing; that stretch reads SAYQVRNSSG…WTTQGCNCSI (119 aa). Residues Asn-80, Asn-93, and Asn-118 are each glycosylated (N-linked (GlcNAc...) asparagine; by host). The segment at 149 to 180 is important for fusion; it reads LVGSATLCSALYVGDLCGSVFLVGQLFTFSPR. The N-linked (GlcNAc...) asparagine; by host glycan is linked to Asn-189.

Belongs to the hepacivirus polyprotein family. In terms of assembly, homooligomer. Interacts with E1 (via C-terminus). Interacts with the non-structural protein 5A. Interacts (via N-terminus) with host STAT1 (via SH2 domain); this interaction results in decreased STAT1 phosphorylation and ubiquitin-mediated proteasome-dependent STAT1 degradation, leading to decreased IFN-stimulated gene transcription. Interacts with host STAT3; this interaction constitutively activates STAT3. Interacts with host LTBR receptor. Interacts with host TNFRSF1A receptor and possibly induces apoptosis. Interacts with host HNRPK. Interacts with host YWHAE. Interacts with host UBE3A/E6AP. Interacts with host DDX3X. Interacts with host APOA2. Interacts with host RXRA protein. Interacts with host SP110 isoform 3/Sp110b; this interaction sequesters the transcriptional corepressor SP110 away from the nucleus. Interacts with host CREB3 nuclear transcription protein; this interaction triggers cell transformation. Interacts with host ACY3. Interacts with host C1QR1. Interacts with host RBM24; this interaction, which enhances the interaction of the mature core protein with 5'-UTR, may inhibit viral translation and favor replication. Interacts with host EIF2AK2/PKR; this interaction induces the autophosphorylation of EIF2AK2. Part of the viral assembly initiation complex composed of NS2, E1, E2, NS3, NS4A, NS5A and the mature core protein. As to quaternary structure, forms a heterodimer with envelope glycoprotein E2. Interacts with mature core protein. Interacts with protease NS2. The heterodimer E1/E2 interacts with host CLDN1; this interaction plays a role in viral entry into host cell. Interacts with host SPSB2 (via C-terminus). Part of the viral assembly initiation complex composed of NS2, E1, E2, NS3, NS4A, NS5A and the mature core protein. In terms of processing, specific enzymatic cleavages in vivo yield mature proteins. The structural proteins, core, E1, E2 and p7 are produced by proteolytic processing by host signal peptidases. The core protein precursor is synthesized as a 23 kDa, which is retained in the ER membrane through the hydrophobic signal peptide. Cleavage by the signal peptidase releases the 21 kDa mature core protein. The cleavage of the core protein precursor occurs between aminoacids 176 and 188 but the exact cleavage site is not known. Some degraded forms of the core protein appear as well during the course of infection. The other proteins (p7, NS2, NS3, NS4A, NS4B, NS5A and NS5B) are cleaved by the viral proteases. Autoprocessing between NS2 and NS3 is mediated by the NS2 cysteine protease catalytic domain and regulated by the NS3 N-terminal domain. Post-translationally, phosphorylated by host PKC and PKA. Ubiquitinated; mediated by UBE3A and leading to core protein subsequent proteasomal degradation. In terms of processing, highly N-glycosylated.

The protein localises to the host endoplasmic reticulum membrane. The protein resides in the host mitochondrion membrane. It is found in the virion. Its subcellular location is the host cytoplasm. It localises to the host nucleus. The protein localises to the host lipid droplet. The protein resides in the virion membrane. Packages viral RNA to form a viral nucleocapsid, and promotes virion budding. Participates in the viral particle production as a result of its interaction with the non-structural protein 5A. Binds RNA and may function as a RNA chaperone to induce the RNA structural rearrangements taking place during virus replication. Modulates viral translation initiation by interacting with viral IRES and 40S ribosomal subunit. Affects various cell signaling pathways, host immunity and lipid metabolism. Prevents the establishment of cellular antiviral state by blocking the interferon-alpha/beta (IFN-alpha/beta) and IFN-gamma signaling pathways and by blocking the formation of phosphorylated STAT1 and promoting ubiquitin-mediated proteasome-dependent degradation of STAT1. Activates STAT3 leading to cellular transformation. Regulates the activity of cellular genes, including c-myc and c-fos. May repress the promoter of p53, and sequester CREB3 and SP110 isoform 3/Sp110b in the cytoplasm. Represses cell cycle negative regulating factor CDKN1A, thereby interrupting an important check point of normal cell cycle regulation. Targets transcription factors involved in the regulation of inflammatory responses and in the immune response: suppresses TNF-induced NF-kappa-B activation, and activates AP-1. Binds to dendritic cells (DCs) via C1QR1, resulting in down-regulation of T-lymphocytes proliferation. Alters lipid metabolism by interacting with hepatocellular proteins involved in lipid accumulation and storage. Induces up-regulation of FAS promoter activity, and thereby contributes to the increased triglyceride accumulation in hepatocytes (steatosis). Its function is as follows. Forms a heterodimer with envelope glycoprotein E2, which mediates virus attachment to the host cell, virion internalization through clathrin-dependent endocytosis and fusion with host membrane. Fusion with the host cell is most likely mediated by both E1 and E2, through conformational rearrangements of the heterodimer required for fusion rather than a classical class II fusion mechanism. E1/E2 heterodimer binds host apolipoproteins such as APOB and ApoE thereby forming a lipo-viro-particle (LVP). APOE associated to the LVP allows the initial virus attachment to cell surface receptors such as the heparan sulfate proteoglycans (HSPGs), syndecan-1 (SDC1), syndecan-1 (SDC2), the low-density lipoprotein receptor (LDLR) and scavenger receptor class B type I (SCARB1). The cholesterol transfer activity of SCARB1 allows E2 exposure and binding of E2 to SCARB1 and the tetraspanin CD81. E1/E2 heterodimer binding on CD81 activates the epithelial growth factor receptor (EGFR) signaling pathway. Diffusion of the complex E1-E2-EGFR-SCARB1-CD81 to the cell lateral membrane allows further interaction with Claudin 1 (CLDN1) and occludin (OCLN) to finally trigger HCV entry. The protein is Genome polyprotein of Hepatitis C virus (isolate EC1) (HCV).